A 305-amino-acid chain; its full sequence is Translation initiation factor eIF2B subunit alpha (305 aa).

Belongs to the eIF-2B alpha/beta/delta subunits family. Component of the translation initiation factor 2B (eIF2B) complex which is a heterodecamer of two sets of five different subunits: alpha, beta, gamma, delta and epsilon. Subunits alpha, beta and delta comprise a regulatory subcomplex and subunits epsilon and gamma comprise a catalytic subcomplex. Within the complex, the hexameric regulatory complex resides at the center, with the two heterodimeric catalytic subcomplexes bound on opposite sides.

The protein localises to the cytoplasm. It is found in the cytosol. Acts as a component of the translation initiation factor 2B (eIF2B) complex, which catalyzes the exchange of GDP for GTP on eukaryotic initiation factor 2 (eIF2) gamma subunit. Its guanine nucleotide exchange factor activity is repressed when bound to eIF2 complex phosphorylated on the alpha subunit, thereby limiting the amount of methionyl-initiator methionine tRNA available to the ribosome and consequently global translation is repressed. This Caenorhabditis elegans protein is Translation initiation factor eIF2B subunit alpha.